A 232-amino-acid chain; its full sequence is Small ribosomal subunit protein uS2 (232 aa).

The protein belongs to the universal ribosomal protein uS2 family.

The sequence is that of Small ribosomal subunit protein uS2 from Heliobacterium modesticaldum (strain ATCC 51547 / Ice1).